We begin with the raw amino-acid sequence, 105 residues long: MRPGKRRPLTRLPFALLSWGMIGLLRVYQYGISPLLGPRCRFWPSCSQYAVEAIQVHGPLKGAWLALKRIVKCHPGHPGGVDPVPPGPHETPRKTSTHDDEPPSR.

The tract at residues Gly76–Arg105 is disordered. The segment covering Glu90–Arg105 has biased composition (basic and acidic residues).

The protein belongs to the UPF0161 family.

The protein localises to the cell inner membrane. Its function is as follows. Could be involved in insertion of integral membrane proteins into the membrane. This chain is Putative membrane protein insertion efficiency factor, found in Chromohalobacter salexigens (strain ATCC BAA-138 / DSM 3043 / CIP 106854 / NCIMB 13768 / 1H11).